The following is a 440-amino-acid chain: GTPase Obg (440 aa).

The 159-residue stretch at 5–163 (STFVDQTKIE…RTLRLELKVL (159 aa)) folds into the Obg domain. One can recognise an OBG-type G domain in the interval 164–338 (ADVGLVGFPS…LMSRAADLVS (175 aa)). Residues 170–177 (GFPSVGKS), 195–199 (FTTLK), 217–220 (DLPG), 288–291 (SQMD), and 319–321 (SSV) contribute to the GTP site. S177 and T197 together coordinate Mg(2+). One can recognise an OCT domain in the interval 362–440 (YHRPEKMEFT…IGDFSFEFVQ (79 aa)).

It belongs to the TRAFAC class OBG-HflX-like GTPase superfamily. OBG GTPase family. Monomer. Mg(2+) serves as cofactor.

Its subcellular location is the cytoplasm. An essential GTPase which binds GTP, GDP and possibly (p)ppGpp with moderate affinity, with high nucleotide exchange rates and a fairly low GTP hydrolysis rate. Plays a role in control of the cell cycle, stress response, ribosome biogenesis and in those bacteria that undergo differentiation, in morphogenesis control. The protein is GTPase Obg of Lactobacillus delbrueckii subsp. bulgaricus (strain ATCC BAA-365 / Lb-18).